A 453-amino-acid chain; its full sequence is Ferruginol synthase (453 aa).

Residues 15 to 35 (LSKKYGPLMSIHLGSLYTVIV) traverse the membrane as a helical segment. Heme is bound at residue C397.

The protein belongs to the cytochrome P450 family. It depends on heme as a cofactor. In terms of tissue distribution, expressed in leaf glandular trichomes.

Its subcellular location is the membrane. The catalysed reaction is abieta-8,11,13-triene + reduced [NADPH--hemoprotein reductase] + O2 = ferruginol + oxidized [NADPH--hemoprotein reductase] + H2O + H(+). It carries out the reaction ferruginol + reduced [NADPH--hemoprotein reductase] + O2 = 11-hydroxyferruginol + oxidized [NADPH--hemoprotein reductase] + H2O + H(+). The enzyme catalyses miltiradiene + 2 reduced [NADPH--hemoprotein reductase] + 2 O2 = 11-oxomiltiradiene + 2 oxidized [NADPH--hemoprotein reductase] + 3 H2O + 2 H(+). It functions in the pathway secondary metabolite biosynthesis; terpenoid biosynthesis. Functionally, monooxygenase involved in the biosynthesis of labdane-related diterpenes natural products. Catalyzes the oxidation of abietatriene to produce ferruginol. Ferruginol is an intermediate in the biosynthesis of carnosate, a potent antioxidant. May also convert miltiradiene into 11-oxomiltiradiene. The protein is Ferruginol synthase of Salvia pomifera (Apple sage).